Consider the following 396-residue polypeptide: Probable sugar efflux transporter (396 aa).

A run of 12 helical transmembrane segments spans residues 15-35 (VVTL…PVGL), 50-70 (VGIM…PFML), 81-101 (LICL…SWSF), 103-123 (VLVI…SITA), 136-156 (AQAL…GLPL), 170-190 (FFAI…LLPL), 209-229 (PALM…YTAY), 246-266 (FATA…VIFG), 275-295 (ALVS…LPAA), 299-319 (IHLG…GLGM), 333-353 (VAMA…ALVG), and 364-384 (MIGY…IIIF).

The protein belongs to the major facilitator superfamily. SotB (TC 2.A.1.2) family.

It is found in the cell inner membrane. Functionally, involved in the efflux of sugars. The physiological role may be the reduction of the intracellular concentration of toxic sugars or sugar metabolites. In Escherichia coli O157:H7 (strain EC4115 / EHEC), this protein is Probable sugar efflux transporter.